The following is a 312-amino-acid chain: MENYNQTSTDFILLGLFPPSRIDLFFFILIVFIFLMALIGNLSMILLIFLDTHLHTPMYFLLSQLSLIDLNYISTIVPKMASDFLHGNKSISFTGCGIQSFFFLALGGAEALLLASMAYDRYIAICFPLHYLIRMSKRVCVLMITGSWIIGSINACAHTVYVLHIPYCRSRAINHFFCDVPAMVTLACMDTWVYEGTVFLSATIFLVFPFIGISCSYGQVLFAVYHMKSAEGRKKAYLTCSTHLTVVTFYYAPFVYTYLRPRSLRSPTEDKVLAVFYTILTPMLNPIIYSLRNKEVMGALTRVSQRICSVKM.

At methionine 1–leucine 24 the chain is on the extracellular side. An N-linked (GlcNAc...) asparagine glycan is attached at asparagine 5. Residues phenylalanine 25 to isoleucine 48 traverse the membrane as a helical segment. Residues phenylalanine 49–threonine 56 are Cytoplasmic-facing. The helical transmembrane segment at proline 57–proline 78 threads the bilayer. Over lysine 79 to glutamine 99 the chain is Extracellular. Asparagine 88 carries N-linked (GlcNAc...) asparagine glycosylation. A disulfide bridge links cysteine 96 with cysteine 188. A helical transmembrane segment spans residues serine 100–tyrosine 119. Residues aspartate 120 to arginine 138 are Cytoplasmic-facing. Residues valine 139–alanine 157 traverse the membrane as a helical segment. At histidine 158–tyrosine 194 the chain is on the extracellular side. The helical transmembrane segment at glutamate 195–glycine 218 threads the bilayer. Residues glutamine 219–lysine 235 are Cytoplasmic-facing. The chain crosses the membrane as a helical span at residues alanine 236–tyrosine 258. Topologically, residues leucine 259–lysine 271 are extracellular. A helical membrane pass occupies residues valine 272 to leucine 291. Residues arginine 292 to methionine 312 are Cytoplasmic-facing.

The protein belongs to the G-protein coupled receptor 1 family.

It is found in the cell membrane. Functionally, odorant receptor. This is Olfactory receptor 2L8 (OR2L8) from Homo sapiens (Human).